The primary structure comprises 396 residues: Phosphoglycerate kinase (396 aa).

Substrate contacts are provided by residues 21–23 (DFN), Arg-36, 59–62 (HLGK), Arg-119, and Arg-156. Residues Lys-206, Gly-294, Glu-325, and 352–355 (GGDS) each bind ATP.

It belongs to the phosphoglycerate kinase family. In terms of assembly, monomer.

The protein localises to the cytoplasm. It carries out the reaction (2R)-3-phosphoglycerate + ATP = (2R)-3-phospho-glyceroyl phosphate + ADP. It participates in carbohydrate degradation; glycolysis; pyruvate from D-glyceraldehyde 3-phosphate: step 2/5. This is Phosphoglycerate kinase from Staphylococcus aureus (strain USA300).